Consider the following 226-residue polypeptide: Octanoyltransferase (226 aa).

The BPL/LPL catalytic domain maps to 31 to 226; it reads PETPDALWIC…SQKLGTYLAP (196 aa). Substrate-binding positions include 70-77, 159-161, and 172-174; these read RGGQVTFH, ALG, and GVA. The Acyl-thioester intermediate role is filled by cysteine 190.

The protein belongs to the LipB family.

The protein resides in the cytoplasm. It catalyses the reaction octanoyl-[ACP] + L-lysyl-[protein] = N(6)-octanoyl-L-lysyl-[protein] + holo-[ACP] + H(+). Its pathway is protein modification; protein lipoylation via endogenous pathway; protein N(6)-(lipoyl)lysine from octanoyl-[acyl-carrier-protein]: step 1/2. Its function is as follows. Catalyzes the transfer of endogenously produced octanoic acid from octanoyl-acyl-carrier-protein onto the lipoyl domains of lipoate-dependent enzymes. Lipoyl-ACP can also act as a substrate although octanoyl-ACP is likely to be the physiological substrate. The sequence is that of Octanoyltransferase from Variovorax paradoxus (strain S110).